Consider the following 369-residue polypeptide: Flagellar P-ring protein (369 aa).

The N-terminal stretch at 1-22 is a signal peptide; that stretch reads MFNVRQLIATTLLLSCAFAAQA.

Belongs to the FlgI family. In terms of assembly, the basal body constitutes a major portion of the flagellar organelle and consists of four rings (L,P,S, and M) mounted on a central rod.

The protein localises to the periplasm. It is found in the bacterial flagellum basal body. In terms of biological role, assembles around the rod to form the L-ring and probably protects the motor/basal body from shearing forces during rotation. The polypeptide is Flagellar P-ring protein (Pseudomonas putida (strain ATCC 47054 / DSM 6125 / CFBP 8728 / NCIMB 11950 / KT2440)).